A 230-amino-acid chain; its full sequence is Oxygen-evolving enhancer protein 3-2, chloroplastic (230 aa).

The N-terminal 49 residues, 1–49 (MAQAVTSMAGLRGASQAVLEGSLQINGSNRLNISRVSVGSQRTGLVIRA), are a transit peptide targeting the chloroplast. The transit peptide at 50-82 (QQNVSVPESSRRSVIGLVAAGLAGGSFVKAVFA) directs the protein to the thylakoid. Phosphoserine is present on S125. T195 is modified (phosphothreonine). Y215 carries the phosphotyrosine modification. At S216 the chain carries Phosphoserine. T218 carries the post-translational modification Phosphothreonine.

It belongs to the PsbQ family.

The protein localises to the plastid. It is found in the chloroplast thylakoid membrane. In terms of biological role, required for photosystem II assembly/stability and photoautotrophic growth under low light conditions. This Arabidopsis thaliana (Mouse-ear cress) protein is Oxygen-evolving enhancer protein 3-2, chloroplastic (PSBQ2).